A 718-amino-acid chain; its full sequence is Putative aminodeoxychorismate synthase (718 aa).

The region spanning 9–203 is the Glutamine amidotransferase type-1 domain; it reads QILLIDCYDS…LSLADTPNIQ (195 aa). The Nucleophile role is filled by Cys88. Residues His177 and Glu179 contribute to the active site. Residues 266 to 718 are PABB component; the sequence is FLDSAKKPGR…NLKNKKRSCK (453 aa).

It in the C-terminal section; belongs to the anthranilate synthase component I family.

It localises to the cytoplasm. It is found in the nucleus. It carries out the reaction chorismate + L-glutamine = 4-amino-4-deoxychorismate + L-glutamate. The protein operates within cofactor biosynthesis; tetrahydrofolate biosynthesis; 4-aminobenzoate from chorismate: step 1/2. Functionally, catalyzes the biosynthesis of 4-amino-4-deoxychorismate (ADC) from chorismate and glutamine. Required for the synthesis of 4-aminobenzoate (PABA), an important component in tetrahydrofolate biosynthesis. This Schizosaccharomyces pombe (strain 972 / ATCC 24843) (Fission yeast) protein is Putative aminodeoxychorismate synthase.